We begin with the raw amino-acid sequence, 152 residues long: Protein SprT-like (152 aa).

The SprT-like domain occupies Gln7–Pro147. His67 contacts Zn(2+). The active site involves Glu68. Position 71 (His71) interacts with Zn(2+).

It belongs to the SprT family. The cofactor is Zn(2+).

Its subcellular location is the cytoplasm. The protein is Protein SprT-like of Bacillus cereus (strain B4264).